The chain runs to 545 residues: Gamma-curcumene synthase (545 aa).

Residues D299, D303, N442, and E450 each coordinate Mg(2+). A DDXXD motif motif is present at residues 299 to 303; that stretch reads DDTYD.

This sequence belongs to the terpene synthase family. Mg(2+) serves as cofactor.

Its subcellular location is the cytoplasm. It is found in the cytosol. It catalyses the reaction (2E,6E)-farnesyl diphosphate = gamma-curcumene + diphosphate. Its pathway is secondary metabolite biosynthesis; terpenoid biosynthesis. Functionally, sesquiterpene synthase involved in gamma-curcumene biosynthesis. This Pogostemon cablin (Patchouli) protein is Gamma-curcumene synthase.